Here is a 200-residue protein sequence, read N- to C-terminus: dITP/XTP pyrophosphatase (200 aa).

7–12 serves as a coordination point for substrate; sequence SNNYHK. Residue aspartate 68 is the Proton acceptor of the active site. Aspartate 68 contacts Mg(2+). Substrate is bound by residues serine 69, 147-150, lysine 170, and 175-176; these read FGYD and HR.

Belongs to the HAM1 NTPase family. In terms of assembly, homodimer. Mg(2+) is required as a cofactor.

It catalyses the reaction XTP + H2O = XMP + diphosphate + H(+). It carries out the reaction dITP + H2O = dIMP + diphosphate + H(+). The catalysed reaction is ITP + H2O = IMP + diphosphate + H(+). Functionally, pyrophosphatase that catalyzes the hydrolysis of nucleoside triphosphates to their monophosphate derivatives, with a high preference for the non-canonical purine nucleotides XTP (xanthosine triphosphate), dITP (deoxyinosine triphosphate) and ITP. Seems to function as a house-cleaning enzyme that removes non-canonical purine nucleotides from the nucleotide pool, thus preventing their incorporation into DNA/RNA and avoiding chromosomal lesions. This is dITP/XTP pyrophosphatase from Acholeplasma laidlawii (strain PG-8A).